Consider the following 536-residue polypeptide: CTP synthase (536 aa).

The interval 1–267 is amidoligase domain; that stretch reads MSKFVFVTGG…CKETLKYLEL (267 aa). A CTP-binding site is contributed by Ser-13. Ser-13 contributes to the UTP binding site. ATP-binding positions include 14-19 and Asp-71; that span reads SIGKGI. Residues Asp-71 and Glu-141 each contribute to the Mg(2+) site. Residues 148 to 150, 188 to 193, and Lys-224 contribute to the CTP site; these read DIE and KTKPTQ. Residues 188–193 and Lys-224 each bind UTP; that span reads KTKPTQ. The 243-residue stretch at 292 to 534 folds into the Glutamine amidotransferase type-1 domain; that stretch reads KVALVGKYIE…IKASQEKLTQ (243 aa). Gly-354 provides a ligand contact to L-glutamine. The active-site Nucleophile; for glutamine hydrolysis is the Cys-381. Residues 382–385, Glu-405, and Arg-462 each bind L-glutamine; that span reads LGMQ. Active-site residues include His-507 and Glu-509.

Belongs to the CTP synthase family. As to quaternary structure, homotetramer.

The catalysed reaction is UTP + L-glutamine + ATP + H2O = CTP + L-glutamate + ADP + phosphate + 2 H(+). It carries out the reaction L-glutamine + H2O = L-glutamate + NH4(+). It catalyses the reaction UTP + NH4(+) + ATP = CTP + ADP + phosphate + 2 H(+). It participates in pyrimidine metabolism; CTP biosynthesis via de novo pathway; CTP from UDP: step 2/2. With respect to regulation, allosterically activated by GTP, when glutamine is the substrate; GTP has no effect on the reaction when ammonia is the substrate. The allosteric effector GTP functions by stabilizing the protein conformation that binds the tetrahedral intermediate(s) formed during glutamine hydrolysis. Inhibited by the product CTP, via allosteric rather than competitive inhibition. Functionally, catalyzes the ATP-dependent amination of UTP to CTP with either L-glutamine or ammonia as the source of nitrogen. Regulates intracellular CTP levels through interactions with the four ribonucleotide triphosphates. The chain is CTP synthase from Prochlorococcus marinus (strain MIT 9215).